We begin with the raw amino-acid sequence, 487 residues long: Glycogen synthase (487 aa).

Lys-15 contacts ADP-alpha-D-glucose.

This sequence belongs to the glycosyltransferase 1 family. Bacterial/plant glycogen synthase subfamily.

It catalyses the reaction [(1-&gt;4)-alpha-D-glucosyl](n) + ADP-alpha-D-glucose = [(1-&gt;4)-alpha-D-glucosyl](n+1) + ADP + H(+). The protein operates within glycan biosynthesis; glycogen biosynthesis. In terms of biological role, synthesizes alpha-1,4-glucan chains using ADP-glucose. The protein is Glycogen synthase of Leptothrix cholodnii (strain ATCC 51168 / LMG 8142 / SP-6) (Leptothrix discophora (strain SP-6)).